The sequence spans 358 residues: Plastoglobulin-1, chloroplastic (358 aa).

Residues 1–47 (MALLSSTLRAPLVFSKNPKPVSLSSLHSRIYLSPRSPRFPSLRFISA) constitute a chloroplast transit peptide. Residues 48-114 (AGDTGDAEKP…NDAGNGTPTF (67 aa)) form a disordered region.

The protein belongs to the PAP/fibrillin family.

The protein localises to the plastid. It is found in the chloroplast. Functionally, may form together with other plastoglobulins a coat on the surface of the lipoprotein particle. The coat may contain receptors for attachment to the thylakoid membrane as well as regulatory proteins that may function in the transfer of lipids to and from the thylakoid membranes. This chain is Plastoglobulin-1, chloroplastic (PG1), found in Pisum sativum (Garden pea).